An 81-amino-acid polypeptide reads, in one-letter code: uncharacterized protein (81 aa).

This is an uncharacterized protein from Bacillus anthracis.